A 276-amino-acid polypeptide reads, in one-letter code: NAD kinase (276 aa).

D68 functions as the Proton acceptor in the catalytic mechanism. NAD(+)-binding positions include 68–69 (DG), R73, 138–139 (NE), K149, D168, 179–184 (TAYSLS), and Q237.

Belongs to the NAD kinase family. A divalent metal cation serves as cofactor.

It localises to the cytoplasm. The enzyme catalyses NAD(+) + ATP = ADP + NADP(+) + H(+). Its function is as follows. Involved in the regulation of the intracellular balance of NAD and NADP, and is a key enzyme in the biosynthesis of NADP. Catalyzes specifically the phosphorylation on 2'-hydroxyl of the adenosine moiety of NAD to yield NADP. The protein is NAD kinase of Methanopyrus kandleri (strain AV19 / DSM 6324 / JCM 9639 / NBRC 100938).